Reading from the N-terminus, the 311-residue chain is MRKTNVSHLVDHFNMTILSGEEGLGREITVTDLSRPGLQLAGYYSYFAEERIQLFGLTEINFFQTLTPEERLERMNFLMQSQVPCFCVTRNQMVPEEMIDVSNRLGVPVLQSPLATTTLVGKVTNFLENRLAPTTTIHGVLTDIYGVGVLIMGSSGIGKSEAALELVKRGHRLVADDAVEIKQTQGGQLSGSAPELIQHLLEIRGVGIINIMTMFGAGAVRNVKNIEMVVQLELWEPHKMYERLGLDEETLKIMDTEIPIITVPVRPGRNLAVIIEVAAMNFRLKRMGYNAAMHFTRKQSNAILEDADSDL.

Residues His-138 and Lys-159 contribute to the active site. Gly-153–Ser-160 serves as a coordination point for ATP. A Mg(2+)-binding site is contributed by Ser-160. Asp-177 functions as the Proton acceptor; for phosphorylation activity. Proton donor; for dephosphorylation activity in the catalytic mechanism. An important for the catalytic mechanism of both phosphorylation and dephosphorylation region spans residues Leu-201–Asn-210. Residue Glu-202 coordinates Mg(2+). Residue Arg-243 is part of the active site. The segment at Pro-264 to Arg-269 is important for the catalytic mechanism of dephosphorylation.

The protein belongs to the HPrK/P family. In terms of assembly, homohexamer. Mg(2+) serves as cofactor.

It catalyses the reaction [HPr protein]-L-serine + ATP = [HPr protein]-O-phospho-L-serine + ADP + H(+). It carries out the reaction [HPr protein]-O-phospho-L-serine + phosphate + H(+) = [HPr protein]-L-serine + diphosphate. Its function is as follows. Catalyzes the ATP- as well as the pyrophosphate-dependent phosphorylation of a specific serine residue in HPr, a phosphocarrier protein of the phosphoenolpyruvate-dependent sugar phosphotransferase system (PTS). HprK/P also catalyzes the pyrophosphate-producing, inorganic phosphate-dependent dephosphorylation (phosphorolysis) of seryl-phosphorylated HPr (P-Ser-HPr). The two antagonistic activities of HprK/P are regulated by several intracellular metabolites, which change their concentration in response to the absence or presence of rapidly metabolisable carbon sources (glucose, fructose, etc.) in the growth medium. Therefore, by controlling the phosphorylation state of HPr, HPrK/P is a sensor enzyme that plays a major role in the regulation of carbon metabolism and sugar transport: it mediates carbon catabolite repression (CCR), and regulates PTS-catalyzed carbohydrate uptake and inducer exclusion. The chain is HPr kinase/phosphorylase from Brevibacillus brevis (strain 47 / JCM 6285 / NBRC 100599).